Consider the following 491-residue polypeptide: Glutamate--tRNA ligase (491 aa).

The 'HIGH' region motif lies at 13–23 (PSPTGFLHIGN). C110, C112, C137, and H139 together coordinate Zn(2+). The short motif at 254–258 (KLSKR) is the 'KMSKS' region element. K257 provides a ligand contact to ATP.

It belongs to the class-I aminoacyl-tRNA synthetase family. Glutamate--tRNA ligase type 1 subfamily. Monomer. Requires Zn(2+) as cofactor.

It localises to the cytoplasm. The catalysed reaction is tRNA(Glu) + L-glutamate + ATP = L-glutamyl-tRNA(Glu) + AMP + diphosphate. Its function is as follows. Catalyzes the attachment of glutamate to tRNA(Glu) in a two-step reaction: glutamate is first activated by ATP to form Glu-AMP and then transferred to the acceptor end of tRNA(Glu). The protein is Glutamate--tRNA ligase of Listeria monocytogenes serovar 1/2a (strain ATCC BAA-679 / EGD-e).